The chain runs to 538 residues: Atos homolog protein B (538 aa).

Over residues 1-18 (MRHVQAEPSPSSEPEAGP) the composition is skewed to low complexity. Disordered stretches follow at residues 1–103 (MRHV…GLLG), 156–185 (HTRD…QLHT), and 197–308 (GGKS…PMGR). The segment covering 227–238 (HTPPGPGPPGPC) has biased composition (pro residues). A phosphoserine mark is found at Ser254 and Ser255. The segment covering 274-286 (AANSSDAKATSFW) has biased composition (polar residues). The required for macropage invasion stretch occupies residues 348-430 (LLGNFEESLL…VPKVGTVQVT (83 aa)). Residues 436 to 444 (QTVVKMFLV) are transactivation domain 1 (TAD1).

The protein belongs to the ATOS family.

The protein resides in the nucleus. Its function is as follows. Transcription regulator that may syncronize transcriptional and translational programs. The polypeptide is Atos homolog protein B (Macaca fascicularis (Crab-eating macaque)).